We begin with the raw amino-acid sequence, 474 residues long: tRNA-2-methylthio-N(6)-dimethylallyladenosine synthase (474 aa).

The region spanning 3–120 (KKLHIKTWGC…LPEMINHVQE (118 aa)) is the MTTase N-terminal domain. [4Fe-4S] cluster-binding residues include Cys-12, Cys-49, Cys-83, Cys-157, Cys-161, and Cys-164. Positions 143-375 (RAEGPTAFVS…QQRISQQAME (233 aa)) constitute a Radical SAM core domain. Residues 378–441 (RKMVGTVQRV…ASSLRGILLR (64 aa)) form the TRAM domain.

It belongs to the methylthiotransferase family. MiaB subfamily. In terms of assembly, monomer. Requires [4Fe-4S] cluster as cofactor.

The protein resides in the cytoplasm. It carries out the reaction N(6)-dimethylallyladenosine(37) in tRNA + (sulfur carrier)-SH + AH2 + 2 S-adenosyl-L-methionine = 2-methylsulfanyl-N(6)-dimethylallyladenosine(37) in tRNA + (sulfur carrier)-H + 5'-deoxyadenosine + L-methionine + A + S-adenosyl-L-homocysteine + 2 H(+). Catalyzes the methylthiolation of N6-(dimethylallyl)adenosine (i(6)A), leading to the formation of 2-methylthio-N6-(dimethylallyl)adenosine (ms(2)i(6)A) at position 37 in tRNAs that read codons beginning with uridine. The polypeptide is tRNA-2-methylthio-N(6)-dimethylallyladenosine synthase (Yersinia pseudotuberculosis serotype O:3 (strain YPIII)).